The sequence spans 458 residues: Hepatocyte nuclear factor 3-beta (458 aa).

The transactivation domain 1 stretch occupies residues 14–93; that stretch reads DWSSYYAEPE…AGAMAGMSGS (80 aa). Residues 106–113 carry the Nuclear localization signal motif; sequence LSPSLSPL. The residue at position 156 (T156) is a Phosphothreonine; by PKB/AKT1. Positions 159-252 form a DNA-binding region, fork-head; it reads KPPYSYISLI…ENGCYLRRQK (94 aa). Residues S212 and S283 each carry the phosphoserine modification. Residues 286–365 are disordered; the sequence is QLGEAAGSAS…PGLPPEAHLK (80 aa). Residues 294–310 show a composition bias toward polar residues; the sequence is ASETPAGTESPHSSASP. T301 carries the phosphothreonine modification. Phosphoserine is present on residues S303, S306, S307, and S309. Residues 339–352 show a composition bias toward low complexity; that stretch reads PGQQQQAAAHLLGP. Residues 361 to 458 form a transactivation domain 2 region; that stretch reads EAHLKPEHHY…VYSRPIMNSS (98 aa). Phosphoserine is present on residues S437 and S458.

Binds DNA as a monomer. Binds TLE1. Interacts with FOXA1 and FOXA3. Interacts with PRKDC. Interacts with AKT1. Interacts with TET1; this interaction may recruit TET1 to specific genomic loci to mediate their demethylation. In terms of processing, phosphorylation on Thr-156 abolishes binding to target promoters and subsequent transcription activation upon insulin stimulation. Liver.

The protein resides in the nucleus. It localises to the cytoplasm. Functionally, transcription factor that is involved in embryonic development, establishment of tissue-specific gene expression and regulation of gene expression in differentiated tissues. Is thought to act as a 'pioneer' factor opening the compacted chromatin for other proteins through interactions with nucleosomal core histones and thereby replacing linker histones at target enhancer and/or promoter sites. Binds DNA with the consensus sequence 5'-[AC]A[AT]T[AG]TT[GT][AG][CT]T[CT]-3'. In embryonic development is required for notochord formation. Involved in the development of multiple endoderm-derived organ systems such as the liver, pancreas and lungs; FOXA1 and FOXA2 seem to have at least in part redundant roles. Originally described as a transcription activator for a number of liver genes such as AFP, albumin, tyrosine aminotransferase, PEPCK, etc. Interacts with the cis-acting regulatory regions of these genes. Involved in glucose homeostasis; regulates the expression of genes important for glucose sensing in pancreatic beta-cells and glucose homeostasis. Involved in regulation of fat metabolism. Acts synergistically with ONECUT1 to activate transcription of female-specific CYP2C12; the function is inhibited by growth hormone-activated STAT5B. Acts synergistically with HNF4A to activate transcription of APOA1. The chain is Hepatocyte nuclear factor 3-beta (Foxa2) from Rattus norvegicus (Rat).